The sequence spans 557 residues: MQDTPQTLNDKAKESWRALQQHAADTANDHILDYFHSDPSRVQSYSLTAAGLTLDYSKNRANSITLEKLVKLAEDAGMKRSIDAMFAGEPINHTEGRAVLHTALRDSSDTPVLVDGQDIKPEIRSALAQMERFVSKVHRGEWLGYSGKPINDVVSIGIGGSYLGPRVAVEALRPYWQENIRCHFVSNVDGSDIAYTLENLNPETTLFIVQSKSFTTQETLANSMTAREWYLREGGSEAGLSKHFVAVSSNVQRARDFGIDAENVFPMWDWVGGRYSLWSAIGLPIALQVDMKAFRELLAGAEAMDQHFKTAPLEQNMPVLMGMLGIWYHNFLGADSYVILPYDQTLENLPAHLQQVDMESNGKGVNRAGIGVDYATGPIIWGGAGTNGQHAYHQLLHQGTRWTPADFILPLKTHKPAGRHHAMLASNCFAQSQALMCGKSLEKARQELLDAGMSSERAEELAPHKVIPGNRPSNTLVMDEINPHTLGALIALYEQKVFVQGVIWNLNSFDQWGVELGKQLSDSILPMLLDTGASTDALDPSSAALVERFRRANGSGS.

Catalysis depends on E359, which acts as the Proton donor. Active-site residues include H390 and K518.

Belongs to the GPI family.

It is found in the cytoplasm. It catalyses the reaction alpha-D-glucose 6-phosphate = beta-D-fructose 6-phosphate. Its pathway is carbohydrate biosynthesis; gluconeogenesis. It participates in carbohydrate degradation; glycolysis; D-glyceraldehyde 3-phosphate and glycerone phosphate from D-glucose: step 2/4. Its function is as follows. Catalyzes the reversible isomerization of glucose-6-phosphate to fructose-6-phosphate. This chain is Glucose-6-phosphate isomerase, found in Hahella chejuensis (strain KCTC 2396).